Here is a 269-residue protein sequence, read N- to C-terminus: Surfeit locus protein 4 (269 aa).

6 consecutive transmembrane segments (helical) span residues 64 to 84 (FLASIFVFINLFGQLSGCILV), 92 to 112 (YACFGLFGIIALQTIAYSILW), 157 to 177 (MQLGGRVLLVLMFMTLLHFDM), 179 to 199 (FFYILQNIVGTALIILVAIGF), 203 to 223 (LAALTLVIWLFGINIYFNAFW), and 242 to 262 (TMSVIGGLLLVVALGPGGVSM). Positions 266 to 269 (KKEW) match the Di-lysine motif motif.

The protein belongs to the SURF4 family.

It is found in the endoplasmic reticulum membrane. The protein resides in the endoplasmic reticulum-Golgi intermediate compartment membrane. The protein localises to the golgi apparatus membrane. In terms of biological role, endoplasmic reticulum cargo receptor that mediates the export of lipoproteins by recruiting cargos into COPII vesicles to facilitate their secretion. Acts as a cargo receptor for lipoproteins bearing both APOB and APOA1, thereby regulating lipoprotein delivery and the maintenance of lipid homeostasis. The polypeptide is Surfeit locus protein 4 (Gallus gallus (Chicken)).